The following is a 137-amino-acid chain: Nucleoside diphosphate kinase (137 aa).

Positions 9, 57, 85, 91, 102, and 112 each coordinate ATP. Residue His-115 is the Pros-phosphohistidine intermediate of the active site.

This sequence belongs to the NDK family. Homotetramer. Mg(2+) serves as cofactor.

It localises to the cytoplasm. The catalysed reaction is a 2'-deoxyribonucleoside 5'-diphosphate + ATP = a 2'-deoxyribonucleoside 5'-triphosphate + ADP. The enzyme catalyses a ribonucleoside 5'-diphosphate + ATP = a ribonucleoside 5'-triphosphate + ADP. Functionally, major role in the synthesis of nucleoside triphosphates other than ATP. The ATP gamma phosphate is transferred to the NDP beta phosphate via a ping-pong mechanism, using a phosphorylated active-site intermediate. The sequence is that of Nucleoside diphosphate kinase from Campylobacter jejuni subsp. jejuni serotype O:6 (strain 81116 / NCTC 11828).